Reading from the N-terminus, the 209-residue chain is Response regulator protein VraR (209 aa).

The 117-residue stretch at 4–120 (KVLFVDDHEM…DIADAVRKTY (117 aa)) folds into the Response regulatory domain. Aspartate 55 is modified (4-aspartylphosphate). Positions 141–206 (RAELYEMLTE…QAVIYAFQHN (66 aa)) constitute an HTH luxR-type domain. A DNA-binding region (H-T-H motif) is located at residues 165–184 (NQEIASASHITIKTVKTHVS).

Phosphorylated by VraS.

Its subcellular location is the cytoplasm. Functionally, member of the two-component regulatory system VraS/VraR involved in the control of the cell wall peptidoglycan biosynthesis. This is Response regulator protein VraR (vraR) from Staphylococcus epidermidis (strain ATCC 35984 / DSM 28319 / BCRC 17069 / CCUG 31568 / BM 3577 / RP62A).